A 311-amino-acid chain; its full sequence is Probable dihydroorotate dehydrogenase A (fumarate) (311 aa).

FMN contacts are provided by residues Ser20 and 44–45 (KT). Substrate-binding positions include Lys44, 68-72 (NSMGL), and Asn127. Asn127 is an FMN binding site. Cys130 (nucleophile) is an active-site residue. Positions 164 and 192 each coordinate FMN. Residue 193–194 (NS) participates in substrate binding. Residues Gly221, 249–250 (GG), and 271–272 (GT) contribute to the FMN site.

Belongs to the dihydroorotate dehydrogenase family. Type 1 subfamily. Homodimer. FMN serves as cofactor.

The protein resides in the cytoplasm. It catalyses the reaction (S)-dihydroorotate + fumarate = orotate + succinate. It participates in pyrimidine metabolism; UMP biosynthesis via de novo pathway. In terms of biological role, catalyzes the conversion of dihydroorotate to orotate with fumarate as the electron acceptor. The polypeptide is Probable dihydroorotate dehydrogenase A (fumarate) (pyrDA) (Enterococcus faecalis (strain ATCC 700802 / V583)).